The following is a 105-amino-acid chain: Phosphoribosyl-ATP pyrophosphatase (105 aa).

This sequence belongs to the PRA-PH family.

The protein resides in the cytoplasm. It catalyses the reaction 1-(5-phospho-beta-D-ribosyl)-ATP + H2O = 1-(5-phospho-beta-D-ribosyl)-5'-AMP + diphosphate + H(+). The protein operates within amino-acid biosynthesis; L-histidine biosynthesis; L-histidine from 5-phospho-alpha-D-ribose 1-diphosphate: step 2/9. This is Phosphoribosyl-ATP pyrophosphatase from Vesicomyosocius okutanii subsp. Calyptogena okutanii (strain HA).